The primary structure comprises 185 residues: Peptidyl-tRNA hydrolase (185 aa).

Y15 lines the tRNA pocket. Residue H20 is the Proton acceptor of the active site. Residues Y64, N66, and N112 each coordinate tRNA.

Belongs to the PTH family. Monomer.

It is found in the cytoplasm. The catalysed reaction is an N-acyl-L-alpha-aminoacyl-tRNA + H2O = an N-acyl-L-amino acid + a tRNA + H(+). Hydrolyzes ribosome-free peptidyl-tRNAs (with 1 or more amino acids incorporated), which drop off the ribosome during protein synthesis, or as a result of ribosome stalling. In terms of biological role, catalyzes the release of premature peptidyl moieties from peptidyl-tRNA molecules trapped in stalled 50S ribosomal subunits, and thus maintains levels of free tRNAs and 50S ribosomes. In Porphyromonas gingivalis (strain ATCC BAA-308 / W83), this protein is Peptidyl-tRNA hydrolase.